A 354-amino-acid chain; its full sequence is Uroporphyrinogen decarboxylase (354 aa).

Substrate-binding positions include arginine 25–arginine 29, aspartate 75, tyrosine 152, threonine 207, and histidine 330.

This sequence belongs to the uroporphyrinogen decarboxylase family. In terms of assembly, homodimer.

It is found in the cytoplasm. It catalyses the reaction uroporphyrinogen III + 4 H(+) = coproporphyrinogen III + 4 CO2. It functions in the pathway porphyrin-containing compound metabolism; protoporphyrin-IX biosynthesis; coproporphyrinogen-III from 5-aminolevulinate: step 4/4. Its function is as follows. Catalyzes the decarboxylation of four acetate groups of uroporphyrinogen-III to yield coproporphyrinogen-III. The protein is Uroporphyrinogen decarboxylase of Xanthomonas oryzae pv. oryzae (strain PXO99A).